The following is a 321-amino-acid chain: Lipoyl synthase (321 aa).

C68, C73, C79, C94, C98, C101, and S308 together coordinate [4Fe-4S] cluster. The region spanning 80–297 (FNHGTATFMI…KAEALAMGFT (218 aa)) is the Radical SAM core domain.

It belongs to the radical SAM superfamily. Lipoyl synthase family. [4Fe-4S] cluster is required as a cofactor.

The protein localises to the cytoplasm. It catalyses the reaction [[Fe-S] cluster scaffold protein carrying a second [4Fe-4S](2+) cluster] + N(6)-octanoyl-L-lysyl-[protein] + 2 oxidized [2Fe-2S]-[ferredoxin] + 2 S-adenosyl-L-methionine + 4 H(+) = [[Fe-S] cluster scaffold protein] + N(6)-[(R)-dihydrolipoyl]-L-lysyl-[protein] + 4 Fe(3+) + 2 hydrogen sulfide + 2 5'-deoxyadenosine + 2 L-methionine + 2 reduced [2Fe-2S]-[ferredoxin]. It functions in the pathway protein modification; protein lipoylation via endogenous pathway; protein N(6)-(lipoyl)lysine from octanoyl-[acyl-carrier-protein]: step 2/2. Its function is as follows. Catalyzes the radical-mediated insertion of two sulfur atoms into the C-6 and C-8 positions of the octanoyl moiety bound to the lipoyl domains of lipoate-dependent enzymes, thereby converting the octanoylated domains into lipoylated derivatives. The sequence is that of Lipoyl synthase from Salmonella arizonae (strain ATCC BAA-731 / CDC346-86 / RSK2980).